We begin with the raw amino-acid sequence, 880 residues long: DNA mismatch repair protein MutS (880 aa).

605 to 612 (GPNMSGKS) provides a ligand contact to ATP. The interval 790-829 (QETAAVPSRGVEPPAPVIEPTPAKEQTPVKEQTTPLVEES) is disordered. Polar residues predominate over residues 818-829 (VKEQTTPLVEES).

The protein belongs to the DNA mismatch repair MutS family.

This protein is involved in the repair of mismatches in DNA. It is possible that it carries out the mismatch recognition step. This protein has a weak ATPase activity. The chain is DNA mismatch repair protein MutS from Limosilactobacillus fermentum (strain NBRC 3956 / LMG 18251) (Lactobacillus fermentum).